The chain runs to 365 residues: Outer membrane porin protein LC (365 aa).

The first 23 residues, 1-23 (MKKLTVAISAVAASVLMAMSAQA), serve as a signal peptide directing secretion.

Belongs to the Gram-negative porin family. As to quaternary structure, homotrimer.

It is found in the host cell outer membrane. Forms pores that allow passive diffusion of small molecules across the host cell outer membrane. The chain is Outer membrane porin protein LC (LC) from Enterobacteria phage PA-2 (Bacteriophage PA-2).